The following is a 239-amino-acid chain: L-cystine transport system permease protein TcyL (239 aa).

An ABC transmembrane type-1 domain is found at 21–216 (LPVTLYILTL…AVAVLFEWFF (196 aa)). 4 helical membrane passes run 25–45 (LYILTLSLLFGFVLGLFLALP), 69–89 (IMVQLFIVFYGIPALTGLIGI), 96–116 (PFYAAVATYALSNAAAAAEII), and 196–216 (EVYIALSIVYYAVAVLFEWFF).

It belongs to the binding-protein-dependent transport system permease family. In terms of assembly, the complex is composed of two ATP-binding proteins (TcyN), two transmembrane proteins (TcyL and TcyM) and two solute-binding proteins (TcyJ and TcyK).

The protein resides in the cell membrane. Functionally, part of the ABC transporter complex TcyJKLMN involved in L-cystine import. Probably responsible for the translocation of the substrate across the membrane. Is also involved in cystathionine, djenkolate, and S-methylcysteine transport. In Bacillus subtilis (strain 168), this protein is L-cystine transport system permease protein TcyL (tcyL).